Reading from the N-terminus, the 470-residue chain is 3-isopropylmalate dehydratase large subunit (470 aa).

The [4Fe-4S] cluster site is built by cysteine 351, cysteine 411, and cysteine 414.

The protein belongs to the aconitase/IPM isomerase family. LeuC type 1 subfamily. In terms of assembly, heterodimer of LeuC and LeuD. [4Fe-4S] cluster serves as cofactor.

The enzyme catalyses (2R,3S)-3-isopropylmalate = (2S)-2-isopropylmalate. The protein operates within amino-acid biosynthesis; L-leucine biosynthesis; L-leucine from 3-methyl-2-oxobutanoate: step 2/4. Catalyzes the isomerization between 2-isopropylmalate and 3-isopropylmalate, via the formation of 2-isopropylmaleate. This chain is 3-isopropylmalate dehydratase large subunit, found in Rhodopseudomonas palustris (strain BisA53).